The primary structure comprises 341 residues: tRNA N6-adenosine threonylcarbamoyltransferase (341 aa).

Residues His-113 and His-117 each coordinate Fe cation. Substrate contacts are provided by residues 141–145, Asp-174, Gly-187, and Asn-282; that span reads LVSGG. Residue Asp-310 coordinates Fe cation.

The protein belongs to the KAE1 / TsaD family. Requires Fe(2+) as cofactor.

The protein localises to the cytoplasm. It catalyses the reaction L-threonylcarbamoyladenylate + adenosine(37) in tRNA = N(6)-L-threonylcarbamoyladenosine(37) in tRNA + AMP + H(+). Required for the formation of a threonylcarbamoyl group on adenosine at position 37 (t(6)A37) in tRNAs that read codons beginning with adenine. Is involved in the transfer of the threonylcarbamoyl moiety of threonylcarbamoyl-AMP (TC-AMP) to the N6 group of A37, together with TsaE and TsaB. TsaD likely plays a direct catalytic role in this reaction. In Porphyromonas gingivalis (strain ATCC BAA-308 / W83), this protein is tRNA N6-adenosine threonylcarbamoyltransferase.